The primary structure comprises 395 residues: Succinyl-diaminopimelate desuccinylase (395 aa).

His-81 contacts Zn(2+). Asp-83 is an active-site residue. Asp-114 is a binding site for Zn(2+). The active-site Proton acceptor is the Glu-146. Glu-147, Glu-175, and His-364 together coordinate Zn(2+).

It belongs to the peptidase M20A family. DapE subfamily. In terms of assembly, homodimer. It depends on Zn(2+) as a cofactor. Requires Co(2+) as cofactor.

The enzyme catalyses N-succinyl-(2S,6S)-2,6-diaminopimelate + H2O = (2S,6S)-2,6-diaminopimelate + succinate. The protein operates within amino-acid biosynthesis; L-lysine biosynthesis via DAP pathway; LL-2,6-diaminopimelate from (S)-tetrahydrodipicolinate (succinylase route): step 3/3. Functionally, catalyzes the hydrolysis of N-succinyl-L,L-diaminopimelic acid (SDAP), forming succinate and LL-2,6-diaminopimelate (DAP), an intermediate involved in the bacterial biosynthesis of lysine and meso-diaminopimelic acid, an essential component of bacterial cell walls. The polypeptide is Succinyl-diaminopimelate desuccinylase (Parvibaculum lavamentivorans (strain DS-1 / DSM 13023 / NCIMB 13966)).